A 177-amino-acid chain; its full sequence is Thymidine kinase (177 aa).

11–18 (GPMFSGKS) is an ATP binding site. The active-site Proton acceptor is the glutamate 83. Phenylalanine 113 provides a ligand contact to substrate. Positions 138 and 141 each coordinate Zn(2+). 157 to 161 (IEIIG) is a substrate binding site. 2 residues coordinate Zn(2+): cysteine 170 and cysteine 173.

Belongs to the thymidine kinase family. As to quaternary structure, homotetramer. Two molecules of substrate bind to each enzyme tetramer.

The enzyme catalyses thymidine + ATP = dTMP + ADP + H(+). Functionally, phosphorylates thymidine and thymidine analogs, such as azidothymidine (AZT). Part of the salvage pathway for pyrimidine deoxyribonucleotide synthesis. In Procyon lotor (Raccoon), this protein is Thymidine kinase (OPG101).